We begin with the raw amino-acid sequence, 164 residues long: Urease subunit beta (164 aa).

2 stretches are compositionally biased toward polar residues: residues M1–A10 and T20–Y30. The interval M1–Y30 is disordered.

The protein belongs to the urease beta subunit family. As to quaternary structure, heterotrimer of UreA (gamma), UreB (beta) and UreC (alpha) subunits. Three heterotrimers associate to form the active enzyme.

Its subcellular location is the cytoplasm. It carries out the reaction urea + 2 H2O + H(+) = hydrogencarbonate + 2 NH4(+). The protein operates within nitrogen metabolism; urea degradation; CO(2) and NH(3) from urea (urease route): step 1/1. Functionally, expression of the urease operon increases the likelihood of bacterial survival by contributing to acid resistance in vitro and in vivo in BALB/c mice. Y.enterocolitica enters the body via an oral path and must survive the acidic stomach before being able to colonize the intestinal mucosa. The protein is Urease subunit beta of Yersinia enterocolitica.